The following is a 239-amino-acid chain: Ubiquinone biosynthesis O-methyltransferase (239 aa).

The S-adenosyl-L-methionine site is built by R44, G63, D84, and M128.

The protein belongs to the methyltransferase superfamily. UbiG/COQ3 family.

It catalyses the reaction a 3-demethylubiquinol + S-adenosyl-L-methionine = a ubiquinol + S-adenosyl-L-homocysteine + H(+). It carries out the reaction a 3-(all-trans-polyprenyl)benzene-1,2-diol + S-adenosyl-L-methionine = a 2-methoxy-6-(all-trans-polyprenyl)phenol + S-adenosyl-L-homocysteine + H(+). It participates in cofactor biosynthesis; ubiquinone biosynthesis. Its function is as follows. O-methyltransferase that catalyzes the 2 O-methylation steps in the ubiquinone biosynthetic pathway. This is Ubiquinone biosynthesis O-methyltransferase from Xanthomonas campestris pv. campestris (strain 8004).